Consider the following 37-residue polypeptide: Chorion class CB protein PCH12 (37 aa).

Residues 1-26 are central domain; sequence DGIFPTVGAGDVWYGCGDGAVGIVAE. Residues 27–37 form a right arm region; the sequence is TPFASTTTNPA.

This sequence belongs to the chorion protein family.

In terms of biological role, this protein is one of many from the eggshell of the silk moth. This chain is Chorion class CB protein PCH12, found in Antheraea polyphemus (Polyphemus moth).